Here is a 935-residue protein sequence, read N- to C-terminus: Progesterone receptor (935 aa).

The interval 1-50 (MTELKAKGPRAPHVAGSPSSPKVGSPLPCSQAAGPFPGSQTSDTLPEASA) is disordered. Residues 1–164 (MTELKAKGPR…PATQRVLSPL (164 aa)) are AF3; mediates transcriptional activation. The modulating, Pro-Rich stretch occupies residues 1 to 568 (MTELKAKGPR…YSFESLPQKI (568 aa)). Ser20 carries the phosphoserine modification. An LXXL motif 1 motif is present at residues 55 to 59 (LDGLL). The tract at residues 62–159 (RICQGQDPTD…DPPAAPATQR (98 aa)) is disordered. Position 81 is a phosphoserine (Ser81). An LXXL motif 2 motif is present at residues 115 to 119 (LDTLW). Phosphoserine is present on residues Ser130 and Ser162. The segment at 165–305 (MSRSGGKAGD…LATTVTDFIH (141 aa)) is mediates transcriptional transrepression. The short motif at 183–187 (KVLPR) is the Nuclear localization signal element. The tract at residues 185–252 (LPRGLSPSRQ…ALGGAAAGGG (68 aa)) is disordered. Ser190 is subject to Phosphoserine. A compositionally biased stretch (polar residues) spans 191–203 (PSRQLLLPTSGSP). Phosphoserine is present on Ser213. Acidic residues predominate over residues 220 to 231 (EVEEEDGSESED). Residues 232 to 246 (SAGPLLKGKPRALGG) show a composition bias toward low complexity. Ser294 carries the post-translational modification Phosphoserine; by MAPK1. The tract at residues 331-365 (GGAGAASAFAPPRSSPSASSTPVPGGDFPDCAYAP) is disordered. The segment covering 335–356 (AASAFAPPRSSPSASSTPVPGG) has biased composition (low complexity). Ser345 carries the post-translational modification Phosphoserine; by MAPK. A Glycyl lysine isopeptide (Lys-Gly) (interchain with G-Cter in SUMO); alternate cross-link involves residue Lys388. Lys388 participates in a covalent cross-link: Glycyl lysine isopeptide (Lys-Gly) (interchain with G-Cter in ubiquitin); alternate. Position 400 is a phosphoserine; by CDK2 (Ser400). Residues 415–452 (PDFPLGPPPSLPPRAPPPRPGEAAVTAAPASASVSSAS) form a disordered region. Positions 418-434 (PLGPPPSLPPRAPPPRP) are enriched in pro residues. A compositionally biased stretch (low complexity) spans 435 to 452 (GEAAVTAAPASASVSSAS). Positions 456–548 (STLECILYKA…VYPPYLNYLR (93 aa)) are AF1; mediates transcriptional activation. A Glycyl lysine isopeptide (Lys-Gly) (interchain with G-Cter in SUMO) cross-link involves residue Lys533. NR C4-type zinc fingers lie at residues 569-589 (CLIC…CGSC) and 605-629 (CAGR…LRKC). Positions 569 to 641 (CLICGDEASG…AGMVLGGRKF (73 aa)) form a DNA-binding region, nuclear receptor. Ser678 carries the phosphoserine modification. An NR LBD domain is found at 681–915 (QDIQLIPPLI…EFPEMMSEVI (235 aa)). The segment at 689-935 (LINLLLSIEP…MVKPLLFHKK (247 aa)) is AF2; mediates transcriptional activation.

This sequence belongs to the nuclear hormone receptor family. Interacts with SMARD1 and UNC45A. Interacts with CUEDC2; the interaction promotes ubiquitination, decreases sumoylation, and represses transcriptional activity. Interacts with PIAS3; the interaction promotes sumoylation of PR in a hormone-dependent manner, inhibits DNA-binding, and alters nuclear export. Interacts with SP1; the interaction requires ligand-induced phosphorylation on Ser-344 by ERK1/2-MAPK. Interacts with PRMT2. Interacts with NCOA2 and NCOA1. Interacts with KLF9. Interacts with GTF2B. In terms of processing, phosphorylated on multiple serine sites. Several of these sites are hormone-dependent. Phosphorylation on Ser-294 is highly hormone-dependent and modulates ubiquitination and sumoylation on Lys-388. Phosphorylation on Ser-345 requires induction by hormone. Basal phosphorylation on Ser-81, Ser-162, Ser-190 and Ser-400 is increased in response to progesterone and can be phosphorylated in vitro by the CDK2-A1 complex. Increased levels of phosphorylation on Ser-400 also in the presence of EGF, heregulin, IGF, PMA and FBS. Phosphorylation at this site by CDK2 is ligand-independent, and increases nuclear translocation and transcriptional activity. Phosphorylation at Ser-162 and Ser-294, but not at Ser-190, is impaired during the G(2)/M phase of the cell cycle. Phosphorylation on Ser-345 by ERK1/2 MAPK is required for interaction with SP1. Post-translationally, sumoylation is hormone-dependent and represses transcriptional activity. Sumoylation on all three sites is enhanced by PIAS3. Desumoylated by SENP1. Sumoylation on Lys-388, the main site of sumoylation, is repressed by ubiquitination on the same site, and modulated by phosphorylation at Ser-294. Ubiquitination is hormone-dependent and represses sumoylation on the same site. Promoted by MAPK-mediated phosphorylation on Ser-294. In terms of processing, palmitoylated by ZDHHC7 and ZDHHC21. Palmitoylation is required for plasma membrane targeting and for rapid intracellular signaling via ERK and AKT kinases and cAMP generation.

The protein resides in the nucleus. Its subcellular location is the cytoplasm. Functionally, the steroid hormones and their receptors are involved in the regulation of eukaryotic gene expression and affect cellular proliferation and differentiation in target tissues. Transcriptional activator of several progesteron-dependent promoters in a variety of cell types. Involved in activation of SRC-dependent MAPK signaling on hormone stimulation. This chain is Progesterone receptor (PGR), found in Pithecia irrorata (Gray monk saki).